Here is a 1463-residue protein sequence, read N- to C-terminus: MEPRLFCWTTLFLLAGWCLPGLPCPSRCLCFKSTVRCMHLMLDHIPQVPQQTTVLDLRFNRIREIPGSAFKKLKNLNTLLLNNNHIRKISRNAFEGLENLLYLYLYKNEIHALDKQTFKGLISLEHLYIHFNQLEMLQPETFGDLLRLERLFLHNNKLSKIPAGSFSNLDSLKRLRLDSNALVCDCDLMWLGELLQGFAQHGHTQAAATCEYPRRLHGRAVASVTVEEFNCQSPRITFEPQDVEVPSGNTVYFTCRAEGNPKPEIIWIHNNHSLDLEDDTRLNVFDDGTLMIRNTRESDQGVYQCMARNSAGEAKTQSAMLRYSSLPAKPSFVIQPQDTEVLIGTSTTLECMATGHPHPLITWTRDNGLELDGSRHVATSSGLYLQNITQRDHGRFTCHANNSHGTVQAAANIIVQAPPQFTVTPKDQVVLEEHAVEWLCEADGNPPPVIVWTKTGGQLPVEGQHTVLSSGTLRIDRAAQHDQGQYECQAVSSLGVKKVSVQLTVKPKALAVFTQLPQDTSVEVGKNINISCHAQGEPQPIITWNKEGVQITESGKFHVDDEGTLTIYDAGFPDQGRYECVARNSFGLAVTNMFLTVTAIQGRQAGDDFVESSILDAVQRVDSAINSTRRHLFSQKPHTSSDLLAQFHYPRDPLIVEMARAGEIFEHTLQLIRERVKQGLTVDLEGKEFRYNDLVSPRSLSLIANLSGCTARRPLPNCSNRCFHAKYRAHDGTCNNLQQPTWGAALTAFARLLQPAYRDGIRAPRGLGLPVGSRQPLPPPRLVATVWARAAAVTPDHSYTRMLMHWGWFLEHDLDHTVPALSTARFSDGRPCSSVCTNDPPCFPMNTRHADPRGTHAPCMLFARSSPACASGRPSATVDSVYAREQINQQTAYIDGSNVYGSSERESQALRDPSVPRGLLKTGFPWPPSGKPLLPFSTGPPTECARQEQESPCFLAGDHRANEHLALAAMHTLWFREHNRMATELSALNPHWEGNTVYQEARKIVGAELQHITYSHWLPKVLGDPGTRMLRGYRGYNPNVNAGIINSFATAAFRFGHTLINPILYRLNATLGEISEGHLPFHKALFSPSRIIKEGGIDPVLRGLFGVAAKWRAPSYLLSPELTQRLFSAAYSAAVDSAATIIQRGRDHGIPPYVDFRVFCNLTSVKNFEDLQNEIKDSEIRQKLRKLYGSPGDIDLWPALMVEDLIPGTRVGPTLMCLFVTQFQRLRDGDRFWYENPGVFTPAQLTQLKQASLSRVLCDNGDSIQQVQADVFVKAEYPQDYLNCSEIPKVDLRVWQDCCADCRSRGQFRAVTQESQKKRSAQYSYPVDKDMELSHLRSRQQDKIYVGEDARNVTVLAKTKFSQDFSTFAAEIQETITALREQINKLEARLRQAGCTDVRGVPRKAEERWMKEDCTHCICESGQVTCVVEICPPAPCPSPELVKGTCCPVCRDRGMPSDSPEKR.

A signal peptide spans 1 to 23; it reads MEPRLFCWTTLFLLAGWCLPGLP. The LRRNT domain maps to 24–50; sequence CPSRCLCFKSTVRCMHLMLDHIPQVPQ. LRR repeat units lie at residues 51–72, 75–96, 99–120, 123–144, and 147–168; these read QTTV…AFKK, NLNT…AFEG, NLLY…TFKG, SLEH…TFGD, and RLER…SFSN. The LRRCT domain occupies 180 to 233; that stretch reads NALVCDCDLMWLGELLQGFAQHGHTQAAATCEYPRRLHGRAVASVTVEEFNCQS. 4 consecutive Ig-like C2-type domains span residues 234-322, 330-414, 419-504, and 507-596; these read PRIT…AMLR, PSFV…ANII, PQFT…VQLT, and PKAL…MFLT. Disulfide bonds link Cys255/Cys305, Cys351/Cys398, Cys440/Cys488, Cys532/Cys580, and Cys718/Cys734. An N-linked (GlcNAc...) asparagine glycan is attached at Asn387. His812 functions as the Proton acceptor in the catalytic mechanism. Asp813 provides a ligand contact to Ca(2+). 2 cysteine pairs are disulfide-bonded: Cys832/Cys842 and Cys836/Cys859. Positions 891, 893, 895, and 897 each coordinate Ca(2+). The cysteines at positions 944 and 953 are disulfide-linked. His1057 serves as a coordination point for heme b. 2 cysteine pairs are disulfide-bonded: Cys1160–Cys1217 and Cys1258–Cys1284. In terms of domain architecture, VWFC spans 1393-1451; it reads AGCTDVRGVPRKAEERWMKEDCTHCICESGQVTCVVEICPPAPCPSPELVKGTCCPVCR.

Belongs to the peroxidase family. XPO subfamily. As to quaternary structure, interacts with PXDN; this interaction inhibits the peroxidase activity of PXDN. Heme b serves as cofactor. In terms of processing, phosphorylation by SRC on tyrosine residues is required for targeting to polysomes. The 57 kDa isoform PMR1 is the only form detected at protein levels in human cell lines. Expressed in heart.

Its subcellular location is the secreted. It is found in the endoplasmic reticulum. It localises to the cell membrane. The protein localises to the cytoplasm. In terms of biological role, probable oxidoreductase. Lacks peroxidase activity. Inhibits the peroxidase activity of PXDN through its interaction. Its function is as follows. Endonuclease selectively degrading some target mRNAs while they are engaged by translating ribosomes, among which albumin and beta-globin mRNAs. This is Probable oxidoreductase PXDNL from Homo sapiens (Human).